The primary structure comprises 100 residues: Small ribosomal subunit protein uS14c (100 aa).

It belongs to the universal ribosomal protein uS14 family. In terms of assembly, part of the 30S ribosomal subunit.

It localises to the plastid. The protein resides in the chloroplast. In terms of biological role, binds 16S rRNA, required for the assembly of 30S particles. In Ceratophyllum demersum (Rigid hornwort), this protein is Small ribosomal subunit protein uS14c.